The chain runs to 209 residues: Methylated-DNA--protein-cysteine methyltransferase (209 aa).

Residue Cys-5 participates in Zn(2+) binding. At Ser-14 the chain carries Phosphoserine. Zn(2+)-binding residues include Cys-24, His-29, and His-89. Residues Thr-99, Tyr-118, Gln-119, Asn-127, and Arg-132 each contribute to the DNA site. Cys-149 serves as the catalytic Nucleophile; methyl group acceptor. Ser-155 is a DNA binding site.

The protein belongs to the MGMT family. Zn(2+) serves as cofactor.

It is found in the nucleus. The catalysed reaction is a 6-O-methyl-2'-deoxyguanosine in DNA + L-cysteinyl-[protein] = S-methyl-L-cysteinyl-[protein] + a 2'-deoxyguanosine in DNA. It catalyses the reaction a 4-O-methyl-thymidine in DNA + L-cysteinyl-[protein] = a thymidine in DNA + S-methyl-L-cysteinyl-[protein]. Its function is as follows. Involved in the cellular defense against the biological effects of O6-methylguanine (O6-MeG) and O4-methylthymine (O4-MeT) in DNA. Repairs the methylated nucleobase in DNA by stoichiometrically transferring the methyl group to a cysteine residue in the enzyme. This is a suicide reaction: the enzyme is irreversibly inactivated. In Rattus norvegicus (Rat), this protein is Methylated-DNA--protein-cysteine methyltransferase (Mgmt).